Consider the following 746-residue polypeptide: NAD(P)H-quinone oxidoreductase subunit 5, chloroplastic (746 aa).

The next 16 membrane-spanning stretches (helical) occupy residues W9 to F29, W40 to I60, I89 to I109, F125 to I145, V147 to T167, G185 to F205, V221 to S241, T258 to A278, L280 to I300, L327 to I347, A354 to S374, T396 to S416, L425 to Y445, I547 to P567, F608 to Y628, and Y723 to F743.

It belongs to the complex I subunit 5 family. In terms of assembly, NDH is composed of at least 16 different subunits, 5 of which are encoded in the nucleus.

The protein localises to the plastid. Its subcellular location is the chloroplast thylakoid membrane. The catalysed reaction is a plastoquinone + NADH + (n+1) H(+)(in) = a plastoquinol + NAD(+) + n H(+)(out). The enzyme catalyses a plastoquinone + NADPH + (n+1) H(+)(in) = a plastoquinol + NADP(+) + n H(+)(out). In terms of biological role, NDH shuttles electrons from NAD(P)H:plastoquinone, via FMN and iron-sulfur (Fe-S) centers, to quinones in the photosynthetic chain and possibly in a chloroplast respiratory chain. The immediate electron acceptor for the enzyme in this species is believed to be plastoquinone. Couples the redox reaction to proton translocation, and thus conserves the redox energy in a proton gradient. This chain is NAD(P)H-quinone oxidoreductase subunit 5, chloroplastic (ndhF), found in Lepidium virginicum (Virginia pepperweed).